The sequence spans 64 residues: MAKKGTRVVVTLECTEARTSSEPRRSNGISRYTTEKNKRNTTERLELKKFNPHLNKMTIHKEIK.

Residues 16–25 (EARTSSEPRR) are compositionally biased toward basic and acidic residues. A disordered region spans residues 16–39 (EARTSSEPRRSNGISRYTTEKNKR).

The protein belongs to the bacterial ribosomal protein bL33 family.

This Prochlorococcus marinus (strain MIT 9515) protein is Large ribosomal subunit protein bL33.